Reading from the N-terminus, the 357-residue chain is Cholinesterase 1 (357 aa).

The Acyl-ester intermediate role is filled by serine 112. Cysteine 166 and cysteine 179 form a disulfide bridge. Active-site charge relay system residues include glutamate 244 and histidine 357.

The protein belongs to the type-B carboxylesterase/lipase family.

The enzyme catalyses an acylcholine + H2O = a carboxylate + choline + H(+). This is Cholinesterase 1 (CHE1) from Branchiostoma lanceolatum (Common lancelet).